A 182-amino-acid polypeptide reads, in one-letter code: Dirigent protein 5 (182 aa).

The first 23 residues, 1–23 (MVGQMKSFLFLFVFLVLTKTVIS), serve as a signal peptide directing secretion. C35 and C181 are joined by a disulfide. N-linked (GlcNAc...) asparagine glycosylation is found at N54 and N118.

It belongs to the plant dirigent protein family. As to quaternary structure, homodimer. Confined to shoot meristem, vascular region of cotyledons and siliques abscission zone.

The protein resides in the secreted. The protein localises to the extracellular space. Its subcellular location is the apoplast. Functionally, dirigent proteins impart stereoselectivity on the phenoxy radical-coupling reaction, yielding optically active lignans from two molecules of coniferyl alcohol in the biosynthesis of lignans, flavonolignans, and alkaloids and thus plays a central role in plant secondary metabolism. Enantiocomplementary dirigent protein that mediates the laccase-catalyzed enantioselective oxidative phenol coupling of (E)-coniferyl alcohol to (-)-pinoresinol. This is Dirigent protein 5 (DIR5) from Arabidopsis thaliana (Mouse-ear cress).